A 55-amino-acid polypeptide reads, in one-letter code: Conotoxin Cal22b (55 aa).

The propeptide occupies 1–5 (GRPSA).

Post-translationally, contains 4 disulfide bonds. Expressed by the venom duct.

Its subcellular location is the secreted. Probable neurotoxin with unknown target. Possibly targets ion channels. This chain is Conotoxin Cal22b, found in Californiconus californicus (California cone).